The primary structure comprises 187 residues: Large ribosomal subunit protein uL5 (187 aa).

This sequence belongs to the universal ribosomal protein uL5 family. Part of the 50S ribosomal subunit; part of the 5S rRNA/L5/L18/L25 subcomplex. Contacts the 5S rRNA and the P site tRNA. Forms a bridge to the 30S subunit in the 70S ribosome.

Its function is as follows. This is one of the proteins that bind and probably mediate the attachment of the 5S RNA into the large ribosomal subunit, where it forms part of the central protuberance. In the 70S ribosome it contacts protein S13 of the 30S subunit (bridge B1b), connecting the 2 subunits; this bridge is implicated in subunit movement. Contacts the P site tRNA; the 5S rRNA and some of its associated proteins might help stabilize positioning of ribosome-bound tRNAs. The polypeptide is Large ribosomal subunit protein uL5 (Ruegeria sp. (strain TM1040) (Silicibacter sp.)).